Reading from the N-terminus, the 510-residue chain is NAD(P)H-quinone oxidoreductase subunit 2 A, chloroplastic (510 aa).

The next 13 helical transmembrane spans lie at 24-44, 57-77, 99-119, 124-144, 149-169, 183-203, 229-249, 295-315, 323-343, 354-374, 395-415, 418-438, and 484-504; these read LLLF…GLIL, IPWL…ALLF, IFQF…VEYI, MAIT…MFLC, LITI…LSGY, YLLM…WLYG, ISIA…PAPF, WHLL…LIAI, MLAY…IVGD, YMLF…LFGL, ALSS…AGFF, LYLF…IGLL, and MILC…IIAI.

Belongs to the complex I subunit 2 family. As to quaternary structure, NDH is composed of at least 16 different subunits, 5 of which are encoded in the nucleus.

It is found in the plastid. It localises to the chloroplast thylakoid membrane. It carries out the reaction a plastoquinone + NADH + (n+1) H(+)(in) = a plastoquinol + NAD(+) + n H(+)(out). It catalyses the reaction a plastoquinone + NADPH + (n+1) H(+)(in) = a plastoquinol + NADP(+) + n H(+)(out). NDH shuttles electrons from NAD(P)H:plastoquinone, via FMN and iron-sulfur (Fe-S) centers, to quinones in the photosynthetic chain and possibly in a chloroplast respiratory chain. The immediate electron acceptor for the enzyme in this species is believed to be plastoquinone. Couples the redox reaction to proton translocation, and thus conserves the redox energy in a proton gradient. The protein is NAD(P)H-quinone oxidoreductase subunit 2 A, chloroplastic of Piper cenocladum (Ant piper).